Here is a 2313-residue protein sequence, read N- to C-terminus: Histone-lysine N-methyltransferase Set2 (2313 aa).

Disordered regions lie at residues 1–115 (MEES…ASTS), 179–442 (AVGG…EETF), 550–858 (EPPL…LKAK), 883–1106 (RLDE…KKAL), 1118–1150 (ETES…PFGD), and 1163–1251 (KRDK…SQGR). Residues 17–29 (GRGRGRPPKVALS) constitute a DNA-binding region (a.T hook 1). Over residues 73–82 (IKFDVRDLLN) the composition is skewed to basic and acidic residues. Over residues 101–115 (STGHSQSGTTAASTS) the composition is skewed to low complexity. The a.T hook 2 DNA-binding region spans 197-209 (PRKRGRPRKSQLA). The segment covering 221-241 (SCSDSDTNSTSTTTSNMSSDS) has biased composition (low complexity). Positions 252–265 (PKSKLRVSLKRLKL) are enriched in basic residues. A compositionally biased stretch (low complexity) spans 266-288 (GGRLESSDSGNSPSSSSPEVEPP). The segment covering 330–345 (ESPKGEEEQEEGRPVE) has biased composition (basic and acidic residues). 3 stretches are compositionally biased toward acidic residues: residues 347–356 (EPQDLIDIDM), 365–375 (PDPEEDLDEIM), and 388–398 (ADDEAEEEEDA). Thr-404 carries the phosphothreonine modification. Low complexity predominate over residues 412–433 (ADSCSSAPRRSRRSAPLSGSSR). The segment covering 552–563 (PLKDESDPKQTE) has biased composition (basic and acidic residues). The segment covering 659 to 671 (EDYESNQEQVAED) has biased composition (acidic residues). Positions 676–685 (CNNQKGQKQT) are enriched in polar residues. Basic and acidic residues-rich tracts occupy residues 689 to 708 (EMKE…EKAM), 719 to 732 (VDKK…EKKV), 740 to 749 (VPEKKMDSKK), and 758 to 782 (KQKE…KSSA). 2 positions are modified to phosphoserine: Ser-786 and Ser-788. 3 stretches are compositionally biased toward polar residues: residues 800-833 (AQWS…SNQP), 918-928 (KSLSGKTSLRR), and 938-955 (LERN…NTSA). A compositionally biased stretch (basic residues) spans 959 to 969 (KPSKVKKKINP). Over residues 997 to 1010 (SSPVSTSSDSSSKR) the composition is skewed to low complexity. Over residues 1016-1039 (TTSDLDGGSKLDQRRYTICEDRQP) the composition is skewed to basic and acidic residues. Low complexity-rich tracts occupy residues 1085–1097 (SRQN…SSAS) and 1118–1127 (ETESSESTSS). Positions 1163 to 1183 (KRDKVDEDQRKEGQDEVKREA) are enriched in basic and acidic residues. The span at 1199-1213 (TPATTPTPSPTQSNP) shows a compositional bias: low complexity. One can recognise an AWS domain in the interval 1307-1360 (NAEMQCDCFLTGDEEAQGHLSCGAGCINRMLMIECGPLCSNGARCTNKRFQQHQ). Zn(2+) is bound by residues Cys-1312, Cys-1314, Cys-1328, Cys-1332, Cys-1341, Cys-1345, and Cys-1351. An SET domain is found at 1362–1479 (WPCRVFRTEK…PGEEITFDYQ (118 aa)). S-adenosyl-L-methionine is bound by residues 1415–1417 (HYY) and 1440–1441 (NH). A Zn(2+)-binding site is contributed by Cys-1443. Positions 1486–1502 (DAQRCYCEAANCRGWIG) constitute a Post-SET domain. Gln-1488 serves as a coordination point for S-adenosyl-L-methionine. A Zn(2+)-binding site is contributed by Cys-1490. Tyr-1491 contributes to the S-adenosyl-L-methionine binding site. Residues Cys-1492 and Cys-1497 each contribute to the Zn(2+) site. 2 disordered regions span residues 1501–1598 (IGGE…KPKV) and 1763–1860 (MKEH…RRTL). The span at 1505–1534 (PDSDEGEQLDEESDSDAEMDEEELEAEPEE) shows a compositional bias: acidic residues. Residues 1539–1551 (KSAKAKAKSKLKA) are compositionally biased toward basic residues. Basic and acidic residues-rich tracts occupy residues 1564–1574 (QTKPKDREYKA), 1763–1774 (MKEHEREADRQQ), and 1784–1806 (EDQR…RDTT). A compositionally biased stretch (polar residues) spans 1817–1832 (SGNNTICTITTQQKGS). Residues 1840-1860 (TRNDNRRRSDIGPPSEQRRTL) show a composition bias toward basic and acidic residues. The 34-residue stretch at 1963 to 1996 (DPLPPAWNWQVTSDGDIYYYNLRERISQWEPPSP) folds into the WW domain. Phosphoserine is present on residues Ser-2130 and Ser-2131. The tract at residues 2177–2218 (LGTVGKRKLPMPPSVTVKKHRQEQRSKKVKSSQSPLTATSAR) is disordered. Over residues 2193 to 2206 (VKKHRQEQRSKKVK) the composition is skewed to basic residues. The segment covering 2207–2216 (SSQSPLTATS) has biased composition (polar residues).

It belongs to the class V-like SAM-binding methyltransferase superfamily. Histone-lysine methyltransferase family. SET2 subfamily. Interacts with (phosphorylated) Polr2A.

The protein resides in the nucleus. The protein localises to the chromosome. It catalyses the reaction L-lysyl(36)-[histone H3] + 3 S-adenosyl-L-methionine = N(6),N(6),N(6)-trimethyl-L-lysyl(36)-[histone H3] + 3 S-adenosyl-L-homocysteine + 3 H(+). Histone methyltransferase that specifically trimethylates 'Lys-36' of histone H3 (H3K36me3). Represents the main enzyme generating H3K36me3, a specific tag for epigenetic transcriptional activation. Involved in dosage compensation in males (X chromosome dosage compensation) by mediating formation of H3K36me3, a mark recognized by msl-3 component of the MSL complex. In addition to its role in dosage compensation in males, promotes germline stem cell differentiation in females: catalyzes formation of H3K36me3, promoting recruitment of msl-3 and subsequent recruitment of the ATAC complex, leading to transcription of genes, such as RpS19b. In Drosophila melanogaster (Fruit fly), this protein is Histone-lysine N-methyltransferase Set2.